Here is a 531-residue protein sequence, read N- to C-terminus: Nuclear RNA export factor 3 (531 aa).

Disordered stretches follow at residues 33–59 and 83–106; these read RSEP…HGAH and QDQT…GNMP. Polar residues predominate over residues 41 to 50; sequence MHSSSHQQQD. Positions 83-102 are enriched in basic and acidic residues; it reads QDQTHVNMEREQKPPERRME. The RRM domain occupies 113-192; it reads WFKITVPFGI…IFVNPAGIPH (80 aa). In terms of domain architecture, NTF2 spans 344 to 494; the sequence is LVLQFLQQYY…LCIVNDKLFV (151 aa).

Belongs to the NXF family. Interacts with NXT1, NXT2, E1B-AP5 and CRM1 nuclear export factor. As to expression, expressed at high level in testis and at low level in a small number of tissues.

Its subcellular location is the nucleus. It is found in the cytoplasm. In terms of biological role, may function as a tissue-specific nuclear mRNA export factor. This chain is Nuclear RNA export factor 3 (NXF3), found in Homo sapiens (Human).